The chain runs to 356 residues: Branched-chain-amino-acid transaminase 1 (356 aa).

Position 197 is an N6-(pyridoxal phosphate)lysine (K197).

It belongs to the class-IV pyridoxal-phosphate-dependent aminotransferase family. Pyridoxal 5'-phosphate is required as a cofactor.

It catalyses the reaction L-leucine + 2-oxoglutarate = 4-methyl-2-oxopentanoate + L-glutamate. The catalysed reaction is L-isoleucine + 2-oxoglutarate = (S)-3-methyl-2-oxopentanoate + L-glutamate. The enzyme catalyses L-valine + 2-oxoglutarate = 3-methyl-2-oxobutanoate + L-glutamate. The protein operates within amino-acid biosynthesis; L-isoleucine biosynthesis; L-isoleucine from 2-oxobutanoate: step 4/4. Its pathway is amino-acid biosynthesis; L-leucine biosynthesis; L-leucine from 3-methyl-2-oxobutanoate: step 4/4. It functions in the pathway amino-acid biosynthesis; L-valine biosynthesis; L-valine from pyruvate: step 4/4. Inhibited by canaline. Transaminates branched-chain amino acids and ketoglutarate. Involved in the final step of the methionine regeneration pathway, where ketomethiobutyrate (KMTB) is converted to methionine via a transamination. The amino donor preference is isoleucine, leucine, valine, phenylalanine, and tyrosine. The polypeptide is Branched-chain-amino-acid transaminase 1 (ilvE) (Bacillus subtilis (strain 168)).